We begin with the raw amino-acid sequence, 183 residues long: Acireductone dioxygenase (183 aa).

Fe(2+) is bound by residues histidine 99, histidine 101, glutamate 105, and histidine 144. 4 residues coordinate Ni(2+): histidine 99, histidine 101, glutamate 105, and histidine 144.

Belongs to the acireductone dioxygenase (ARD) family. In terms of assembly, monomer. Requires Fe(2+) as cofactor. It depends on Ni(2+) as a cofactor.

It catalyses the reaction 1,2-dihydroxy-5-(methylsulfanyl)pent-1-en-3-one + O2 = 3-(methylsulfanyl)propanoate + CO + formate + 2 H(+). The catalysed reaction is 1,2-dihydroxy-5-(methylsulfanyl)pent-1-en-3-one + O2 = 4-methylsulfanyl-2-oxobutanoate + formate + 2 H(+). It participates in amino-acid biosynthesis; L-methionine biosynthesis via salvage pathway; L-methionine from S-methyl-5-thio-alpha-D-ribose 1-phosphate: step 5/6. In terms of biological role, catalyzes 2 different reactions between oxygen and the acireductone 1,2-dihydroxy-3-keto-5-methylthiopentene (DHK-MTPene) depending upon the metal bound in the active site. Fe-containing acireductone dioxygenase (Fe-ARD) produces formate and 2-keto-4-methylthiobutyrate (KMTB), the alpha-ketoacid precursor of methionine in the methionine recycle pathway. Ni-containing acireductone dioxygenase (Ni-ARD) produces methylthiopropionate, carbon monoxide and formate, and does not lie on the methionine recycle pathway. This is Acireductone dioxygenase from Microcystis aeruginosa (strain NIES-843 / IAM M-2473).